A 344-amino-acid chain; its full sequence is Succinylglutamate desuccinylase (344 aa).

H63, E66, and H160 together coordinate Zn(2+). E224 is an active-site residue.

Belongs to the AspA/AstE family. Succinylglutamate desuccinylase subfamily. Zn(2+) is required as a cofactor.

It catalyses the reaction N-succinyl-L-glutamate + H2O = L-glutamate + succinate. Its pathway is amino-acid degradation; L-arginine degradation via AST pathway; L-glutamate and succinate from L-arginine: step 5/5. Transforms N(2)-succinylglutamate into succinate and glutamate. The protein is Succinylglutamate desuccinylase of Shewanella sp. (strain MR-7).